A 190-amino-acid polypeptide reads, in one-letter code: GTP cyclohydrolase 1 (190 aa).

Cys-75, His-78, and Cys-146 together coordinate Zn(2+).

This sequence belongs to the GTP cyclohydrolase I family. Homomer.

It carries out the reaction GTP + H2O = 7,8-dihydroneopterin 3'-triphosphate + formate + H(+). It functions in the pathway cofactor biosynthesis; 7,8-dihydroneopterin triphosphate biosynthesis; 7,8-dihydroneopterin triphosphate from GTP: step 1/1. This is GTP cyclohydrolase 1 from Campylobacter lari (strain RM2100 / D67 / ATCC BAA-1060).